The chain runs to 1096 residues: Inactive phospholipase C-like protein 1 (1096 aa).

The tract at residues 1-101 (MAEGAASREA…KKTVSFSSMP (101 aa)) is disordered. A compositionally biased stretch (low complexity) spans 26 to 41 (GADAASGDAAPEASGG). Phosphoserine occurs at positions 48 and 78. An interaction with PPP1C region spans residues 83–222 (PSNQKCGGRK…NIWVSGLRYL (140 aa)). T94 carries the phosphothreonine modification. Phosphoserine is present on S96. The 111-residue stretch at 114 to 224 (SFMQAGCELK…WVSGLRYLVS (111 aa)) folds into the PH domain. One can recognise a PI-PLC X-box domain in the interval 399-543 (QDMTQPLSHY…LKHMIIVKGK (145 aa)). Residues 544 to 568 (KLPSESDLLEGEVTDEDEEAEMSRR) form an interaction with GABA A beta subunit region. T557 bears the Phosphothreonine mark. S570 carries the post-translational modification Phosphoserine. The region spanning 586-702 (LSDLVSICKS…GYVLRPSIMR (117 aa)) is the PI-PLC Y-box domain. One can recognise a C2 domain in the interval 702-831 (RDEVSYFSAN…PGYRHVPLRS (130 aa)). Positions 1040 to 1060 (DLLKNAKNEAVENIKQIQLAC) form a coiled coil. The segment at 1067–1096 (KGPGSAAEAKGKRSLEAIEEKESSEENGKL) is disordered. The segment covering 1075–1096 (AKGKRSLEAIEEKESSEENGKL) has biased composition (basic and acidic residues). S1080 is subject to Phosphoserine.

The protein belongs to the PRIP family. Interacts with PPP2CA, GABA receptor beta subunits, GABA receptor gamma-2 subunits. Interacts with Ins(1,4,5)P3, Ins(1,4,5,6)P4, GABARAP, and PPP1C. May form a ternary complex with GABA receptor beta subunit and GABARAP. The formation of a ternary complex with GABA receptor beta subunit and GABARAP could be the key step for facilitating the association of GABARAP with the GABA receptor gamma-2 subunit and to allow it to be transported at the right destination. Phosphorylation of Thr-94 resulted in dissociation of PPP1C from PRIP1. In vitro, phosphorylated by the catalytic subunit of PKA. Expressed in brain. Found in the granular cell and Purkinje cell layers in the cerebellum; and in the hippocampal pyramidal cells, dentate granule cells and pyramidal granule cells of the cerebral cortex in the cerebrum.

Its subcellular location is the cytoplasm. In terms of biological role, involved in an inositol phospholipid-based intracellular signaling cascade. Shows no PLC activity to phosphatidylinositol 4,5-bisphosphate and phosphatidylinositol. Component in the phospho-dependent endocytosis process of GABA A receptor. Acts as an inhibitor of PPP1C. The protein is Inactive phospholipase C-like protein 1 (Plcl1) of Rattus norvegicus (Rat).